The following is a 363-amino-acid chain: Probable protein phosphatase 2C member 13, mitochondrial (363 aa).

The transit peptide at 1–59 (MVCFASLRRALPLLLRATTTTTPRFLLPRALSGGVGGGAAVDARALLRGHSGWRGLRVA) directs the protein to the mitochondrion. One can recognise a PPM-type phosphatase domain in the interval 111–357 (KCGYSSFRGK…DNITCIVVQF (247 aa)). Residues Asp-147, Gly-148, Asp-309, and Asp-348 each coordinate Mn(2+).

Belongs to the PP2C family. Mg(2+) serves as cofactor. Requires Mn(2+) as cofactor. Highly expressed in mature pollen grains.

It localises to the mitochondrion. It catalyses the reaction O-phospho-L-seryl-[protein] + H2O = L-seryl-[protein] + phosphate. It carries out the reaction O-phospho-L-threonyl-[protein] + H2O = L-threonyl-[protein] + phosphate. Probable protein phosphatase that may play a role as a mitochondrial signal transduction mediator in pollen germination. May function in retrograde signaling from the mitochondria to the nucleus. May be a downstream factor of cytoplasmic male sterility (CMS). CMS is caused by genetic incompatibility between nuclei and mitochondria within male reproductive organs. This chain is Probable protein phosphatase 2C member 13, mitochondrial, found in Oryza sativa subsp. japonica (Rice).